A 408-amino-acid chain; its full sequence is LL-diaminopimelate aminotransferase (408 aa).

Substrate-binding residues include Tyr15 and Gly42. Residues Tyr72, 108-109, Tyr132, Asn187, Tyr218, and 246-248 contribute to the pyridoxal 5'-phosphate site; these read SK and SFS. Substrate contacts are provided by Lys109, Tyr132, and Asn187. The residue at position 249 (Lys249) is an N6-(pyridoxal phosphate)lysine. Positions 257 and 291 each coordinate pyridoxal 5'-phosphate. Substrate-binding residues include Asn291 and Arg387.

This sequence belongs to the class-I pyridoxal-phosphate-dependent aminotransferase family. LL-diaminopimelate aminotransferase subfamily. As to quaternary structure, homodimer. It depends on pyridoxal 5'-phosphate as a cofactor.

It catalyses the reaction (2S,6S)-2,6-diaminopimelate + 2-oxoglutarate = (S)-2,3,4,5-tetrahydrodipicolinate + L-glutamate + H2O + H(+). It functions in the pathway amino-acid biosynthesis; L-lysine biosynthesis via DAP pathway; LL-2,6-diaminopimelate from (S)-tetrahydrodipicolinate (aminotransferase route): step 1/1. Functionally, involved in the synthesis of meso-diaminopimelate (m-DAP or DL-DAP), required for both lysine and peptidoglycan biosynthesis. Catalyzes the direct conversion of tetrahydrodipicolinate to LL-diaminopimelate. This Prochlorococcus marinus (strain NATL1A) protein is LL-diaminopimelate aminotransferase.